A 146-amino-acid polypeptide reads, in one-letter code: Leghemoglobin Lb120-29 (146 aa).

The 145-residue stretch at 2-146 (GFTDKQEALV…LASAIKKAMS (145 aa)) folds into the Globin domain. Residues tyrosine 24 and tyrosine 29 each carry the nitrated tyrosine modification. Residue serine 44 coordinates heme b. Serine 44 carries the phosphoserine modification. Histidine 61 provides a ligand contact to O2. Lysine 64, histidine 93, and lysine 96 together coordinate heme b. Tyrosine 134 is modified (nitrated tyrosine).

It belongs to the plant globin family. In terms of assembly, monomer. Nitrated in effective nodules and particularly in hypoxic conditions; this mechanism may play a protective role in the symbiosis by buffering toxic peroxynitrite NO(2)(-). Nitration level decrease during nodule senescence. Post-translationally, phosphorylation at Ser-44 disrupts the molecular environment of its porphyrin ring oxygen binding pocket, thus leading to a reduced oxygen consumption and to the delivery of oxygen O(2) to symbiosomes. As to expression, root nodules.

It localises to the cytoplasm. It is found in the cytosol. The protein resides in the nucleus. Its function is as follows. Leghemoglobin that reversibly binds oxygen O(2) through a pentacoordinated heme iron. In root nodules, facilitates the diffusion of oxygen to the bacteroids while preventing the bacterial nitrogenase from being inactivated by buffering dioxygen, nitric oxide and carbon monoxide, and promoting the formation of reactive oxygen species (ROS, e.g. H(2)O(2)). This role is essential for symbiotic nitrogen fixation (SNF). This is Leghemoglobin Lb120-29 from Pisum sativum (Garden pea).